Consider the following 396-residue polypeptide: L-lactate dehydrogenase (396 aa).

The FMN hydroxy acid dehydrogenase domain maps to 1-380 (MIISAASDYR…TQDSLVQELS (380 aa)). Residue tyrosine 24 participates in substrate binding. Positions 106 and 127 each coordinate FMN. Position 129 (tyrosine 129) interacts with substrate. Residue threonine 155 participates in FMN binding. Residue arginine 164 participates in substrate binding. Position 251 (lysine 251) interacts with FMN. Histidine 275 acts as the Proton acceptor in catalysis. Arginine 278 is a binding site for substrate. An FMN-binding site is contributed by 306–330 (DSGIRNGLDVVRMIALGADTVLLGR).

Belongs to the FMN-dependent alpha-hydroxy acid dehydrogenase family. FMN is required as a cofactor.

Its subcellular location is the cell inner membrane. The enzyme catalyses (S)-lactate + A = pyruvate + AH2. Functionally, catalyzes the conversion of L-lactate to pyruvate. Is coupled to the respiratory chain. This chain is L-lactate dehydrogenase, found in Escherichia coli (strain SMS-3-5 / SECEC).